The chain runs to 388 residues: Staphopain A (388 aa).

The first 25 residues, 1-25 (MKRNFPKLIALSLILSLSVTPIANA), serve as a signal peptide directing secretion. The propeptide occupies 26–214 (ESNSNIKAKD…TSQFKSNNYT (189 aa)). Catalysis depends on residues Cys-238, His-334, and Asn-355.

This sequence belongs to the peptidase C47 family. As to quaternary structure, in the cytoplasm, prematurely activated/folded ScpA forms a stable non-covalent complex with ScpB. Post-translationally, cleavage leads to the activation of ScpA probably by an auto-catalytic manner.

It is found in the secreted. It carries out the reaction Broad endopeptidase action on proteins including elastin, but rather limited hydrolysis of small-molecule substrates. Assays are conveniently made with hemoglobin, casein or Z-Phe-Arg-NHMec as substrate.. With respect to regulation, prematurely activated/folded staphopain A is inhibited by staphostatin A (ScpB), which is probably required to protect staphylococcal cytoplasmic proteins from degradation by ScpA. In terms of biological role, cysteine protease that plays an important role in the inhibition of host innate immune response. Cleaves host elastins found in connective tissues, pulmonary surfactant protein A in the lungs, and the chemokine receptor CXCR2 on leukocytes. Proteolytic cleavage of surfactant protein A impairs bacterial phagocytosis by neutrophils while CXCR2 degradation blocks neutrophil activation and chemotaxis. Additionally, promotes vascular leakage by activating the plasma kallikerin/kinin system, resulting in hypotension. The sequence is that of Staphopain A (sspP) from Staphylococcus aureus (strain MSSA476).